The sequence spans 493 residues: Transmembrane protein 145 (493 aa).

A helical transmembrane segment spans residues 9-29 (LRRLLPPLLLLLLSLPPRARA). An N-linked (GlcNAc...) asparagine glycan is attached at asparagine 35. A run of 7 helical transmembrane segments spans residues 175–195 (VTFL…GYLL), 207–227 (MFMA…IYWG), 241–261 (ILAK…LILL), 282–302 (VYMT…AEFF), 318–338 (GLIG…LVSL), 349–369 (VPFF…ALIA), and 381–401 (IVNG…LIMT). Asparagine 444 carries N-linked (GlcNAc...) asparagine glycosylation. The disordered stretch occupies residues 464–493 (PATSPLPRAAPDSGLPLFRDLRPPGPLRDL).

The protein localises to the membrane. In Homo sapiens (Human), this protein is Transmembrane protein 145 (TMEM145).